The primary structure comprises 398 residues: Protein CDKN2AIP homolog A (398 aa).

The 106-residue stretch at leucine 19–serine 124 folds into the XRN2-binding (XTBD) domain. The disordered stretch occupies residues lysine 118–arginine 245. Residues glutamate 131 to serine 147 are compositionally biased toward basic and acidic residues. 3 stretches are compositionally biased toward polar residues: residues serine 154–leucine 163, arginine 189–serine 199, and glutamine 226–asparagine 238.

The protein belongs to the CARF family.

The protein resides in the nucleus. It is found in the nucleoplasm. Functionally, may regulate DNA damage response and cell proliferation. This chain is Protein CDKN2AIP homolog A (cdkn2aip-a), found in Xenopus laevis (African clawed frog).